The chain runs to 464 residues: Chromosomal replication initiator protein DnaA (464 aa).

Residues 1–82 (MKNAAELWHN…GSRLDIQFIE (82 aa)) are domain I, interacts with DnaA modulators. The domain II stretch occupies residues 82–125 (EEGQAKHMLDRQNEEVEVMEVAPAKTKAQKTPKSSDELVMSELG). Residues 126-342 (QLNEKYTFDT…GALTRVIAYA (217 aa)) form a domain III, AAA+ region region. Residues Gly170, Gly172, Lys173, and Thr174 each contribute to the ATP site. The tract at residues 343–464 (NLVGRTIDPN…EQIKHELKHS (122 aa)) is domain IV, binds dsDNA.

This sequence belongs to the DnaA family. Oligomerizes as a right-handed, spiral filament on DNA at oriC.

The protein resides in the cytoplasm. In terms of biological role, plays an essential role in the initiation and regulation of chromosomal replication. ATP-DnaA binds to the origin of replication (oriC) to initiate formation of the DNA replication initiation complex once per cell cycle. Binds the DnaA box (a 9 base pair repeat at the origin) and separates the double-stranded (ds)DNA. Forms a right-handed helical filament on oriC DNA; dsDNA binds to the exterior of the filament while single-stranded (ss)DNA is stabiized in the filament's interior. The ATP-DnaA-oriC complex binds and stabilizes one strand of the AT-rich DNA unwinding element (DUE), permitting loading of DNA polymerase. After initiation quickly degrades to an ADP-DnaA complex that is not apt for DNA replication. Binds acidic phospholipids. The sequence is that of Chromosomal replication initiator protein DnaA from Exiguobacterium sibiricum (strain DSM 17290 / CCUG 55495 / CIP 109462 / JCM 13490 / 255-15).